Here is a 720-residue protein sequence, read N- to C-terminus: Transcription factor bHLH155 (720 aa).

The segment covering 522-534 has biased composition (polar residues); that stretch reads YPSSSSDQFQTSL. The interval 522-558 is disordered; that stretch reads YPSSSSDQFQTSLDIPKKNKKRAKPGESSRPRPRDRQ. The Nuclear localization signal signature appears at 540–547; that stretch reads NKKRAKPG. The region spanning 544–593 is the bHLH domain; that stretch reads AKPGESSRPRPRDRQLIQDRIKELRELVPNGSKCSIDSLLERTIKHMLFL. Basic and acidic residues predominate over residues 545 to 558; that stretch reads KPGESSRPRPRDRQ.

It belongs to the bHLH protein family. LHW subfamily. As to quaternary structure, homodimer.

The protein localises to the nucleus. Transcription factor that may regulate root development. This is Transcription factor bHLH155 (BHLH155) from Arabidopsis thaliana (Mouse-ear cress).